We begin with the raw amino-acid sequence, 369 residues long: 4-hydroxy-3-methylbut-2-en-1-yl diphosphate synthase (flavodoxin) (369 aa).

[4Fe-4S] cluster-binding residues include C270, C273, C305, and E312.

It belongs to the IspG family. Requires [4Fe-4S] cluster as cofactor.

It catalyses the reaction (2E)-4-hydroxy-3-methylbut-2-enyl diphosphate + oxidized [flavodoxin] + H2O + 2 H(+) = 2-C-methyl-D-erythritol 2,4-cyclic diphosphate + reduced [flavodoxin]. It functions in the pathway isoprenoid biosynthesis; isopentenyl diphosphate biosynthesis via DXP pathway; isopentenyl diphosphate from 1-deoxy-D-xylulose 5-phosphate: step 5/6. Converts 2C-methyl-D-erythritol 2,4-cyclodiphosphate (ME-2,4cPP) into 1-hydroxy-2-methyl-2-(E)-butenyl 4-diphosphate. This Pseudomonas putida (strain W619) protein is 4-hydroxy-3-methylbut-2-en-1-yl diphosphate synthase (flavodoxin).